Here is an 89-residue protein sequence, read N- to C-terminus: MKLSIADFEEWLRERGYDLMMGEQNFRLYLDLGFSALLFYNSNLLFSFILDKVGLKSADERVPDRLRFEIAKRLRRIEATKDEIEIELL.

A helical membrane pass occupies residues 28–50; it reads LYLDLGFSALLFYNSNLLFSFIL.

It is found in the membrane. This is an uncharacterized protein from Archaeoglobus fulgidus (strain ATCC 49558 / DSM 4304 / JCM 9628 / NBRC 100126 / VC-16).